Consider the following 446-residue polypeptide: Na(+)-translocating NADH-quinone reductase subunit A (446 aa).

This sequence belongs to the NqrA family. In terms of assembly, composed of six subunits; NqrA, NqrB, NqrC, NqrD, NqrE and NqrF.

It catalyses the reaction a ubiquinone + n Na(+)(in) + NADH + H(+) = a ubiquinol + n Na(+)(out) + NAD(+). Its function is as follows. NQR complex catalyzes the reduction of ubiquinone-1 to ubiquinol by two successive reactions, coupled with the transport of Na(+) ions from the cytoplasm to the periplasm. NqrA to NqrE are probably involved in the second step, the conversion of ubisemiquinone to ubiquinol. This is Na(+)-translocating NADH-quinone reductase subunit A from Aliivibrio salmonicida (strain LFI1238) (Vibrio salmonicida (strain LFI1238)).